The primary structure comprises 389 residues: UDP-N-acetylglucosamine--N-acetylmuramyl-(pentapeptide) pyrophosphoryl-undecaprenol N-acetylglucosamine transferase (389 aa).

UDP-N-acetyl-alpha-D-glucosamine-binding positions include 17–19 (TAG), Asn-137, Arg-179, Ser-213, and Gln-308.

The protein belongs to the glycosyltransferase 28 family. MurG subfamily.

Its subcellular location is the cell membrane. It catalyses the reaction di-trans,octa-cis-undecaprenyl diphospho-N-acetyl-alpha-D-muramoyl-L-alanyl-D-glutamyl-meso-2,6-diaminopimeloyl-D-alanyl-D-alanine + UDP-N-acetyl-alpha-D-glucosamine = di-trans,octa-cis-undecaprenyl diphospho-[N-acetyl-alpha-D-glucosaminyl-(1-&gt;4)]-N-acetyl-alpha-D-muramoyl-L-alanyl-D-glutamyl-meso-2,6-diaminopimeloyl-D-alanyl-D-alanine + UDP + H(+). The protein operates within cell wall biogenesis; peptidoglycan biosynthesis. Cell wall formation. Catalyzes the transfer of a GlcNAc subunit on undecaprenyl-pyrophosphoryl-MurNAc-pentapeptide (lipid intermediate I) to form undecaprenyl-pyrophosphoryl-MurNAc-(pentapeptide)GlcNAc (lipid intermediate II). This is UDP-N-acetylglucosamine--N-acetylmuramyl-(pentapeptide) pyrophosphoryl-undecaprenol N-acetylglucosamine transferase from Rhodococcus erythropolis (strain PR4 / NBRC 100887).